Consider the following 287-residue polypeptide: Nucleotide-binding protein MXAN_6564 (287 aa).

13–20 (GMSGSGKS) is a binding site for ATP. A GTP-binding site is contributed by 62-65 (DVRE).

It belongs to the RapZ-like family.

Its function is as follows. Displays ATPase and GTPase activities. The sequence is that of Nucleotide-binding protein MXAN_6564 from Myxococcus xanthus (strain DK1622).